Reading from the N-terminus, the 153-residue chain is MVFEGHLVGTGLKVGVVVGRFNEFITSKLLGGALDGLKRHGVEESDIDVAWVPGAFEIPLIAKKMASSGKYDAVITLGTVIRGATTHYDYVCNEVAKGVASLSLQMDIPVIFGVLTTETIEQAIERAGTKAGNKGYESAVAAIEMAHLSKQWA.

5-amino-6-(D-ribitylamino)uracil-binding positions include phenylalanine 21, 55 to 57 (AFE), and 79 to 81 (TVI). 84–85 (AT) serves as a coordination point for (2S)-2-hydroxy-3-oxobutyl phosphate. Histidine 87 serves as the catalytic Proton donor. Phenylalanine 112 contacts 5-amino-6-(D-ribitylamino)uracil. Arginine 126 contacts (2S)-2-hydroxy-3-oxobutyl phosphate.

Belongs to the DMRL synthase family. As to quaternary structure, forms an icosahedral capsid composed of 60 subunits, arranged as a dodecamer of pentamers.

The catalysed reaction is (2S)-2-hydroxy-3-oxobutyl phosphate + 5-amino-6-(D-ribitylamino)uracil = 6,7-dimethyl-8-(1-D-ribityl)lumazine + phosphate + 2 H2O + H(+). It participates in cofactor biosynthesis; riboflavin biosynthesis; riboflavin from 2-hydroxy-3-oxobutyl phosphate and 5-amino-6-(D-ribitylamino)uracil: step 1/2. Functionally, catalyzes the formation of 6,7-dimethyl-8-ribityllumazine by condensation of 5-amino-6-(D-ribitylamino)uracil with 3,4-dihydroxy-2-butanone 4-phosphate. This is the penultimate step in the biosynthesis of riboflavin. In Bacillus cereus (strain B4264), this protein is 6,7-dimethyl-8-ribityllumazine synthase.